The chain runs to 90 residues: DNA-directed RNA polymerase subunit omega (90 aa).

Residues 69–90 (RQEQQEQDAAELAAVSSITHNR) form a disordered region.

The protein belongs to the RNA polymerase subunit omega family. The RNAP catalytic core consists of 2 alpha, 1 beta, 1 beta' and 1 omega subunit. When a sigma factor is associated with the core the holoenzyme is formed, which can initiate transcription.

The catalysed reaction is RNA(n) + a ribonucleoside 5'-triphosphate = RNA(n+1) + diphosphate. Its function is as follows. Promotes RNA polymerase assembly. Latches the N- and C-terminal regions of the beta' subunit thereby facilitating its interaction with the beta and alpha subunits. This is DNA-directed RNA polymerase subunit omega from Aliivibrio salmonicida (strain LFI1238) (Vibrio salmonicida (strain LFI1238)).